Here is a 264-residue protein sequence, read N- to C-terminus: Hydroxyethylthiazole kinase (264 aa).

Met52 provides a ligand contact to substrate. ATP contacts are provided by Arg127 and Thr173. Residue Gly200 coordinates substrate.

This sequence belongs to the Thz kinase family. The cofactor is Mg(2+).

It carries out the reaction 5-(2-hydroxyethyl)-4-methylthiazole + ATP = 4-methyl-5-(2-phosphooxyethyl)-thiazole + ADP + H(+). Its pathway is cofactor biosynthesis; thiamine diphosphate biosynthesis; 4-methyl-5-(2-phosphoethyl)-thiazole from 5-(2-hydroxyethyl)-4-methylthiazole: step 1/1. In terms of biological role, catalyzes the phosphorylation of the hydroxyl group of 4-methyl-5-beta-hydroxyethylthiazole (THZ). In Pectobacterium atrosepticum (strain SCRI 1043 / ATCC BAA-672) (Erwinia carotovora subsp. atroseptica), this protein is Hydroxyethylthiazole kinase.